Reading from the N-terminus, the 204-residue chain is Cytochrome P450 monooxygenase PC-23 (204 aa).

Position 138 (Cys-138) interacts with heme.

This sequence belongs to the cytochrome P450 family. Heme is required as a cofactor.

The protein operates within secondary metabolite biosynthesis. Functionally, cytochrome P450 monooxygenase; part of the gene cluster that mediates the biosynthesis of the indole diterpenes penitrems. The geranylgeranyl diphosphate (GGPP) synthase penG catalyzes the first step in penitrem biosynthesis via conversion of farnesyl pyrophosphate and isopentyl pyrophosphate into geranylgeranyl pyrophosphate (GGPP). Condensation of indole-3-glycerol phosphate with GGPP by the prenyl transferase penC then forms 3-geranylgeranylindole (3-GGI). Epoxidation by the FAD-dependent monooxygenase penM leads to a epoxidized-GGI that is substrate of the terpene cyclase penB for cyclization to yield paspaline. Paspaline is subsequently converted to 13-desoxypaxilline by the cytochrome P450 monooxygenase penP, the latter being then converted to paxilline by the cytochrome P450 monooxygenase penQ. Paxilline is converted to beta-paxitriol via C-10 ketoreduction by the short-chain dehydrogenase PC-15 which can be monoprenylated at the C-20 by the indole diterpene prenyltransferase penD. A two-step elimination (acetylation and elimination) process performed by the O-acetyltransferase PC-16 and the P.simplicissimum ptmI-ortholog not yet identified in P.crustosum, leads to the production of the prenylated form of penijanthine. The FAD-linked oxidoreductase ptmO then converts the prenylated form of penijanthine into PC-M5 which is in turn transformed into PC-M4 by the aromatic dimethylallyltransferase PC-22. A series of oxidation steps involving 4 cytochrome P450 monooxygenases (PC-21, PC-05, PC-23, PC-20) and a FAD-dependent monooxygenase (PC-14) are required for the transformation of PC-M4 to penitrems A and E. Synthesis of these final products is proposed to proceed via penitrems D and C (PC-21, PC-05, PC-14) and penitrems B and F (PC-21, PC-05, PC-14, PC-23). The polypeptide is Cytochrome P450 monooxygenase PC-23 (Penicillium crustosum (Blue mold fungus)).